Consider the following 278-residue polypeptide: Probable endonuclease 4 (278 aa).

Zn(2+) contacts are provided by H69, H109, E145, D179, H182, H214, D227, H229, and E259.

Belongs to the AP endonuclease 2 family. Requires Zn(2+) as cofactor.

The enzyme catalyses Endonucleolytic cleavage to 5'-phosphooligonucleotide end-products.. Its function is as follows. Endonuclease IV plays a role in DNA repair. It cleaves phosphodiester bonds at apurinic or apyrimidinic (AP) sites, generating a 3'-hydroxyl group and a 5'-terminal sugar phosphate. The polypeptide is Probable endonuclease 4 (Phocaeicola vulgatus (strain ATCC 8482 / DSM 1447 / JCM 5826 / CCUG 4940 / NBRC 14291 / NCTC 11154) (Bacteroides vulgatus)).